We begin with the raw amino-acid sequence, 299 residues long: GTPase Era (299 aa).

An Era-type G domain is found at 5–172 (KSGFVSIIGR…IDVLKTYLPE (168 aa)). A G1 region spans residues 13–20 (GRPNVGKS). 13–20 (GRPNVGKS) lines the GTP pocket. Residues 39–43 (QTTRN) are G2. The tract at residues 60–63 (DTPG) is G3. Residues 60-64 (DTPGI) and 122-125 (NKID) each bind GTP. The G4 stretch occupies residues 122–125 (NKID). Residues 151 to 153 (ISA) form a G5 region. A KH type-2 domain is found at 203-280 (TSEEIPHAIG…YLELWVKVQK (78 aa)).

The protein belongs to the TRAFAC class TrmE-Era-EngA-EngB-Septin-like GTPase superfamily. Era GTPase family. As to quaternary structure, monomer.

It is found in the cytoplasm. The protein resides in the cell membrane. Functionally, an essential GTPase that binds both GDP and GTP, with rapid nucleotide exchange. Plays a role in 16S rRNA processing and 30S ribosomal subunit biogenesis and possibly also in cell cycle regulation and energy metabolism. The sequence is that of GTPase Era from Staphylococcus haemolyticus (strain JCSC1435).